A 262-amino-acid chain; its full sequence is 2-keto-4-pentenoate hydratase 2 (262 aa).

This sequence belongs to the hydratase/decarboxylase family. MhpD subfamily. Requires a divalent metal cation as cofactor.

It catalyses the reaction (S)-4-hydroxy-2-oxopentanoate = (2Z)-2-hydroxypenta-2,4-dienoate + H2O. The protein operates within aromatic compound metabolism; 3-phenylpropanoate degradation. Functionally, catalyzes the conversion of 2-hydroxypentadienoic acid (enolic form of 2-oxopent-4-enoate) to 4-hydroxy-2-ketopentanoic acid. This Dechloromonas aromatica (strain RCB) protein is 2-keto-4-pentenoate hydratase 2.